The chain runs to 342 residues: Phosphate acyltransferase (342 aa).

Belongs to the PlsX family. In terms of assembly, homodimer. Probably interacts with PlsY.

Its subcellular location is the cytoplasm. The catalysed reaction is a fatty acyl-[ACP] + phosphate = an acyl phosphate + holo-[ACP]. It functions in the pathway lipid metabolism; phospholipid metabolism. Catalyzes the reversible formation of acyl-phosphate (acyl-PO(4)) from acyl-[acyl-carrier-protein] (acyl-ACP). This enzyme utilizes acyl-ACP as fatty acyl donor, but not acyl-CoA. In Shewanella halifaxensis (strain HAW-EB4), this protein is Phosphate acyltransferase.